A 178-amino-acid chain; its full sequence is Large ribosomal subunit protein bL25 (178 aa).

It belongs to the bacterial ribosomal protein bL25 family. CTC subfamily. Part of the 50S ribosomal subunit; part of the 5S rRNA/L5/L18/L25 subcomplex. Contacts the 5S rRNA. Binds to the 5S rRNA independently of L5 and L18.

In terms of biological role, this is one of the proteins that binds to the 5S RNA in the ribosome where it forms part of the central protuberance. The protein is Large ribosomal subunit protein bL25 of Helicobacter pylori (strain J99 / ATCC 700824) (Campylobacter pylori J99).